Here is a 71-residue protein sequence, read N- to C-terminus: uncharacterized protein (71 aa).

One can recognise an HTH cro/C1-type domain in the interval 5–59 (IKEFRAKFNMTQEELAKRVGVRRETIVFLEKGKYNPSLKLAYKIARVFNAKIEDI). A DNA-binding region (H-T-H motif) is located at residues 16-35 (QEELAKRVGVRRETIVFLEK).

This is an uncharacterized protein from Archaeoglobus fulgidus (strain ATCC 49558 / DSM 4304 / JCM 9628 / NBRC 100126 / VC-16).